The sequence spans 1940 residues: MSSDQEMAIFGEAAPYLRKSEKERIEAQNKPFDAKTSVFVAEPKESFVKGTIQSREGGKVTVKTEGGATLTVKEDQVFPMNPPKFDKIEDMAMMTHLHEPAVLYNLKERYAAWMIYTYSGLFCVTVNPYKWLPVYNPEVVTAYRGKKRQEAPPHIFSISDNAYQFMLTDRENQSILITGESGAGKTVNTKRVIQYFATIAVTGDKKKEEITSGKIQGTLEDQIISANPLLEAFGNAKTVRNDNSSRFGKFIRIHFGTTGKLASADIETYLLEKSRVTFQLKAERSYHIFYQITSNRKPELIEMLLITTNPYDYPFISQGEISVASIDDQEELIATDSAIDILGFTNEEKVSIYKLTGAVMHYGNLKFKQKQREEQAEPDGTEVADKAAYLQSLNSADLLKALCYPRVKVGNEYVTKGQTVEQVTNAVGALAKAVYEKMFLWMVARINQQLDTKQPRQYFIGVLDIAGFEIFDFNSLEQLCINFTNEKLQQFFNHHMFVLEQEEYKREGIEWTFIDFGMDLAACIELIEKPMGIFSILEEECMFPKATDMSFKNKLYDQHLGKSANFQKPKVVKGKPEAHFALIHYAGVVDYNITGWLEKNKDPLNDTVVGLYQKSALKTLAFLFSGTPTGDSEASGGTKKGGKKKGSSFQTVSALFRENLNKLMTNLRSTHPHFVRCIIPNETKTPGAMEHELVLHQLRCNGVLEGIRICRKGFPSRILYADFKQRYKVLNASAIPEGQYIDSKKASEKLLASIDIDHTQYKFGHTKVFFKAGLLGLLEEMRDEKLAQLMTRTQARCRGFLARVEYQKMVERRESIFCIQYNIRAFMNVKHWPWMKLFFRIKPLLKSAETEKEMATMKEEFQKTKDELAKSEAKRKELEEKMVTLLKEKNDLQLQVQSEAEGLADAEERCDQLIKTKIQLEAKIKEVTERAEDEEEINAELTAKKRKLEDECSELKKDIDDLELTLAKVEKEKHATENKVKNLTEEMAGLDETIAKLTKEKKALQEAHQQTLDDLQAEEDKVNTLTKAKTKLEQQVDDLEGSLEQEKKLRMDLERAKRKLEGDLKLAQESIMDIENEKQQLDEKLKKKEFEISNLQSKIEDEQALGIQLQKKIKELQARIEELEEEIEAERASRAKAEKQRSDLSRELEEISERLEEAGGATSAQIEMNKKREAEFQKMRRDLEEATLQHEATAAALRKKHADSVAELGEQIDNLQRVKQKLEKEKSEMKMEIDDLASNVETISKAKGNLEKMCRTLEDQVNELKSKEEEQQRLINDLTTQRGRLQTESGEFSRQLDEKEALVSQLSRGKQAFTQQIEELKRQLEEEIKAKNALAHGLQSARHDCDLLREQYEEEQESKAELQRALSKANTEVAQWRTKYETDAIQRTEELEEAKKKLAQRLQAAEEHVEAVNAKCASLEKTKQRLQNEVEDLMLDVERTNAACAALDKKQRNFDKILAEWKQKYEETHAELEAAQKEARSLGTELFKMKNAYEESLDQLETLKRENKNLQQEISDLTEQIAEGGKRMHELEKIKKQVEQEKSEIQAALEEAEASLEHEEGKILRIQLELNQVKSEIDRKIAEKDEEIDQLKRNHIRVVESMQTMLDAEIRSRNDAIRLKKKMEGDLNEMEIQLNHANRMAAEALKNYRNTQAILKDTQIHLDDALRGQEDLKEQLAMVERRANLLQAEIEELRATLEQTERSRKIAEQELLDASERVQLLHTQNTSLINTKKKLETDITQIQGEMEDILQEARNAEEKAKKAITDAAMMAEELKKEQDTSAHLERMKKNMEQTVKDLQNRLDEAEQLALKGGKKQIQKLEARVRELEGEVESEQKRNVEAVKGLRKHERRVKELTYQTEEDRKNILRLQDLVDKLQAKVKSYKRQAEEAEEQSNTNLSKFRKLQHELEEAEERADIAESQVNKLRVKSREVHTKIISEE.

The 50-residue stretch at 33–82 folds into the Myosin N-terminal SH3-like domain; the sequence is DAKTSVFVAEPKESFVKGTIQSREGGKVTVKTEGGATLTVKEDQVFPMNP. Phosphothreonine is present on residues Thr64 and Thr69. The Myosin motor domain maps to 86 to 783; it reads DKIEDMAMMT…LLGLLEEMRD (698 aa). Lys130 carries the post-translational modification N6,N6,N6-trimethyllysine. Residue 179 to 186 coordinates ATP; it reads GESGAGKT. The residue at position 389 (Tyr389) is a Phosphotyrosine. Ser392 bears the Phosphoserine mark. Thr419 is subject to Phosphothreonine. Position 625 is a phosphoserine (Ser625). Residues 660-682 are actin-binding; that stretch reads LNKLMTNLRSTHPHFVRCIIPNE. Pros-methylhistidine is present on His758. The segment at 762 to 776 is actin-binding; it reads KFGHTKVFFKAGLLG. An IQ domain is found at 786–815; sequence LAQLMTRTQARCRGFLARVEYQKMVERRES. The stretch at 844–1940 forms a coiled coil; it reads LLKSAETEKE…EVHTKIISEE (1097 aa). Phosphoserine is present on residues Ser1093, Ser1097, Ser1163, and Ser1238. Thr1242 is modified (phosphothreonine). Ser1244 bears the Phosphoserine mark. A phosphothreonine mark is found at Thr1256 and Thr1287. Ser1289, Ser1293, Ser1304, and Ser1307 each carry phosphoserine. The residue at position 1465 (Tyr1465) is a Phosphotyrosine. Thr1468 carries the phosphothreonine modification. The residue at position 1493 (Tyr1493) is a Phosphotyrosine. Position 1496 is a phosphoserine (Ser1496). A Phosphothreonine modification is found at Thr1502. A Phosphoserine modification is found at Ser1515. At Thr1518 the chain carries Phosphothreonine. Phosphoserine occurs at positions 1543, 1555, 1575, 1601, 1715, and 1727. Phosphothreonine occurs at positions 1731 and 1737. Positions 1886 to 1905 are disordered; that stretch reads QAEEAEEQSNTNLSKFRKLQ.

The protein belongs to the TRAFAC class myosin-kinesin ATPase superfamily. Myosin family. In terms of assembly, muscle myosin is a hexameric protein that consists of 2 heavy chain subunits (MHC), 2 alkali light chain subunits (MLC) and 2 regulatory light chain subunits (MLC-2). Interacts with GCSAM.

It localises to the cytoplasm. The protein resides in the myofibril. In terms of biological role, myosins are actin-based motor molecules with ATPase activity essential for muscle contraction. This is Myosin-2 (MYH2) from Bos taurus (Bovine).